A 222-amino-acid chain; its full sequence is N-(5'-phosphoribosyl)anthranilate isomerase (222 aa).

It belongs to the TrpF family.

The enzyme catalyses N-(5-phospho-beta-D-ribosyl)anthranilate = 1-(2-carboxyphenylamino)-1-deoxy-D-ribulose 5-phosphate. The protein operates within amino-acid biosynthesis; L-tryptophan biosynthesis; L-tryptophan from chorismate: step 3/5. This Rhizobium etli (strain CIAT 652) protein is N-(5'-phosphoribosyl)anthranilate isomerase.